The sequence spans 1104 residues: Receptor-type guanylate cyclase gcy-15 (1104 aa).

Over 1–431 the chain is Extracellular; the sequence is MEIAINRLNA…ENCGPPANNT (431 aa). N-linked (GlcNAc...) asparagine glycans are attached at residues N43, N237, N263, N287, N407, and N429. Residues 432–452 traverse the membrane as a helical segment; it reads FIIVISVGVAVLIGLAIAAAF. Topologically, residues 453-1104 are cytoplasmic; the sequence is LYKRYRYERR…QIQEKTYEFS (652 aa). Residues 528–823 form the Protein kinase domain; it reads FNTGSTARAG…QIKRKLKPLT (296 aa). ATP-binding positions include 534 to 542 and K576; that span reads ARAGPFGPI. The stretch at 838 to 871 forms a coiled coil; sequence IEKYTDKLEKDIAERNEELEAEKAKSEALLKMML. The Guanylate cyclase domain maps to 894 to 1024; sequence TVFFSDCPGF…DTVNTASRME (131 aa).

The protein belongs to the adenylyl cyclase class-4/guanylyl cyclase family. In terms of tissue distribution, expressed bilaterally in ASG sensory neurons.

It is found in the cell membrane. The enzyme catalyses GTP = 3',5'-cyclic GMP + diphosphate. In terms of biological role, guanylate cyclase involved in the production of the second messenger cGMP. The sequence is that of Receptor-type guanylate cyclase gcy-15 from Caenorhabditis elegans.